Reading from the N-terminus, the 476-residue chain is Rifampicin monooxygenase (476 aa).

Positions 12, 31, 32, 98, 122, and 156 each coordinate FAD. Rifampicin-binding residues include R196 and R213. The FAD site is built by D277, L290, and N291.

The protein belongs to the rifampicin monooxygenase family. Requires FAD as cofactor.

It carries out the reaction rifampicin + NADPH + O2 = rifampicin para-naphthoquinone carboxamide + NADP(+) + H2O + H(+). It catalyses the reaction rifampicin + NADH + O2 = rifampicin para-naphthoquinone carboxamide + NAD(+) + H2O + H(+). The catalysed reaction is rifamycin SV + NADPH + O2 = rifamycin SV para-naphthoquinone carboxamide + NADP(+) + H2O. The enzyme catalyses rifamycin SV + NADH + O2 = rifamycin SV para-naphthoquinone carboxamide + NAD(+) + H2O. In terms of biological role, monooxygenase that can modify rifampicin, thereby inactivating its antibiotic activity. Inactivates a broad range of rifamycin antibiotics. The protein is Rifampicin monooxygenase of Streptomyces venezuelae (strain ATCC 10712 / CBS 650.69 / DSM 40230 / JCM 4526 / NBRC 13096 / PD 04745).